Reading from the N-terminus, the 557-residue chain is Potassium-transporting ATPase potassium-binding subunit (557 aa).

Helical transmembrane passes span 5 to 25 (GFLL…PLGS), 63 to 83 (LCAI…MLLG), 132 to 152 (GLTV…FALI), 170 to 190 (LLRI…LFFI), 253 to 273 (FVQM…FGEV), 283 to 303 (LLWA…WAEV), 329 to 349 (VLVS…AVIA), 356 to 376 (ALGG…FGGV), 379 to 399 (GLYG…LMIG), 416 to 436 (LTAL…ALAM), 484 to 504 (LLAF…MAIA), and 526 to 546 (LFVG…FIPA).

The protein belongs to the KdpA family. In terms of assembly, the system is composed of three essential subunits: KdpA, KdpB and KdpC.

Its subcellular location is the cell inner membrane. Part of the high-affinity ATP-driven potassium transport (or Kdp) system, which catalyzes the hydrolysis of ATP coupled with the electrogenic transport of potassium into the cytoplasm. This subunit binds the periplasmic potassium ions and delivers the ions to the membrane domain of KdpB through an intramembrane tunnel. The polypeptide is Potassium-transporting ATPase potassium-binding subunit (Escherichia coli (strain SE11)).